Reading from the N-terminus, the 102-residue chain is Integration host factor subunit alpha (102 aa).

Belongs to the bacterial histone-like protein family. Heterodimer of an alpha and a beta chain.

This protein is one of the two subunits of integration host factor, a specific DNA-binding protein that functions in genetic recombination as well as in transcriptional and translational control. The chain is Integration host factor subunit alpha from Buchnera aphidicola subsp. Acyrthosiphon pisum (strain 5A).